The primary structure comprises 133 residues: Cytochrome c' (133 aa).

Residues arginine 12, threonine 72, cysteine 122, cysteine 125, and histidine 126 each coordinate heme c.

Post-translationally, binds 1 heme c group covalently per subunit.

In terms of biological role, cytochrome c' is the most widely occurring bacterial c-type cytochrome. Cytochromes c' are high-spin proteins and the heme has no sixth ligand. Their exact function is not known. The polypeptide is Cytochrome c' (Rhodocyclus tenuis (Rhodospirillum tenue)).